The sequence spans 164 residues: Putative 4-hydroxy-4-methyl-2-oxoglutarate aldolase (164 aa).

Substrate is bound by residues 80 to 83 (GGNL) and arginine 102. Aspartate 103 provides a ligand contact to a divalent metal cation.

This sequence belongs to the class II aldolase/RraA-like family. Homotrimer. Requires a divalent metal cation as cofactor.

It catalyses the reaction 4-hydroxy-4-methyl-2-oxoglutarate = 2 pyruvate. The catalysed reaction is oxaloacetate + H(+) = pyruvate + CO2. Its function is as follows. Catalyzes the aldol cleavage of 4-hydroxy-4-methyl-2-oxoglutarate (HMG) into 2 molecules of pyruvate. Also contains a secondary oxaloacetate (OAA) decarboxylase activity due to the common pyruvate enolate transition state formed following C-C bond cleavage in the retro-aldol and decarboxylation reactions. This Paraburkholderia phymatum (strain DSM 17167 / CIP 108236 / LMG 21445 / STM815) (Burkholderia phymatum) protein is Putative 4-hydroxy-4-methyl-2-oxoglutarate aldolase.